A 366-amino-acid polypeptide reads, in one-letter code: Alcohol dehydrogenase (366 aa).

Residues Cys41, His62, Glu63, and Asp167 each coordinate Zn(2+).

It belongs to the zinc-containing alcohol dehydrogenase family. As to quaternary structure, homotetramer. It depends on Zn(2+) as a cofactor.

The catalysed reaction is a primary alcohol + NAD(+) = an aldehyde + NADH + H(+). It carries out the reaction a secondary alcohol + NAD(+) = a ketone + NADH + H(+). The enzyme catalyses (R,R)-butane-2,3-diol + NAD(+) = (R)-acetoin + NADH + H(+). It catalyses the reaction an aldehyde + NAD(+) + H2O = a carboxylate + NADH + 2 H(+). Its function is as follows. Multifunctional alcohol dehydrogenase exhibiting NAD(+)-dependent dehydrogenase activities for 2,3-butanediol, ethanol and acetaldehyde, and reductase activities for acetoin (NADH-dependent), and diacetyl and acetaldehyde (independently of whether NADH or NADPH is the reductant). The rate of oxidation of 2,3-butanediol is much higher than for the oxidation of ethanol. Has acetaldehyde dehydrogenase activity leading to acetate formation. May function in the release of excess reducing power in the absence of exogenous hydrogen acceptors such as oxygen. The polypeptide is Alcohol dehydrogenase (adh) (Cupriavidus necator (Alcaligenes eutrophus)).